The chain runs to 54 residues: Ovomucoid (54 aa).

Residues 4-54 (VDCSDYPRPDCTLEYMPLCGSDNKTYGNKCNFCNAVVDSNGTLTLSHFGKC) form the Kazal-like domain. Disulfide bonds link C6-C36, C14-C33, and C22-C54. Residue N43 is glycosylated (N-linked (GlcNAc...) asparagine).

The protein resides in the secreted. This is Ovomucoid from Dendrocygna eytoni (Plumed whistling-duck).